Here is a 975-residue protein sequence, read N- to C-terminus: Kinesin heavy chain (975 aa).

The 322-residue stretch at 12-333 (SIKVVCRFRP…LDFGRRAKTV (322 aa)) folds into the Kinesin motor domain. 92 to 99 (GQTSSGKT) contacts ATP. The tract at residues 180–321 (VSSPEDVFEV…PASFNESETK (142 aa)) is microtubule-binding. The stretch at 335–931 (NVVCVNEELT…DRIKEAVRQK (597 aa)) forms a coiled coil. Residues 810–891 (VAKELQTLHN…LPKLEKRLRC (82 aa)) form a necessary for associating with milt region. The globular stretch occupies residues 932-975 (HLGRRGPQAQIAKPIRSGQGAIAIRGGGAVGGPSPLAQVNPVNS).

This sequence belongs to the TRAFAC class myosin-kinesin ATPase superfamily. Kinesin family. Kinesin subfamily. As to quaternary structure, oligomer composed of two heavy chains and two light chains.

Its subcellular location is the cytoplasm. It is found in the cytoskeleton. In terms of biological role, kinesin is a microtubule-associated force-producing protein that may play a role in organelle transport. Milt and Miro form an essential protein complex that links Khc to mitochondria for light chain-independent, anterograde transport of mitochondria. This chain is Kinesin heavy chain (Khc), found in Drosophila melanogaster (Fruit fly).